The following is a 162-amino-acid chain: 3-hydroxyacyl-[acyl-carrier-protein] dehydratase FabZ (162 aa).

His-49 is an active-site residue.

Belongs to the thioester dehydratase family. FabZ subfamily.

The protein localises to the cytoplasm. It carries out the reaction a (3R)-hydroxyacyl-[ACP] = a (2E)-enoyl-[ACP] + H2O. Involved in unsaturated fatty acids biosynthesis. Catalyzes the dehydration of short chain beta-hydroxyacyl-ACPs and long chain saturated and unsaturated beta-hydroxyacyl-ACPs. The chain is 3-hydroxyacyl-[acyl-carrier-protein] dehydratase FabZ from Solibacter usitatus (strain Ellin6076).